The following is a 265-amino-acid chain: Neuronal membrane glycoprotein M6-b (265 aa).

The helical transmembrane segment at G31–F51 threads the bilayer. N-linked (GlcNAc...) asparagine glycosylation occurs at N73. Helical transmembrane passes span V90–F110 and F136–V156. N-linked (GlcNAc...) asparagine glycosylation occurs at N177. A helical transmembrane segment spans residues L224–M244. The residue at position 257 (S257) is a Phosphoserine.

Belongs to the myelin proteolipid protein family. Interacts with SERT. As to expression, highly expressed in the ventral medullary surface, moderately in the cerebral cortex and cerebellum, poorly in lung and kidney, and not at all in heart, skeletal muscle, liver, stomach or stomach.

The protein resides in the membrane. The protein localises to the cell membrane. Functionally, may be involved in neural development. Involved in regulation of osteoblast function and bone formation. Involved in matrix vesicle release by osteoblasts; this function seems to involve maintenance of the actin cytoskeleton. May be involved in cellular trafficking of SERT and thereby in regulation of serotonin uptake. This chain is Neuronal membrane glycoprotein M6-b (Gpm6b), found in Rattus norvegicus (Rat).